The following is a 326-amino-acid chain: Endo-beta-1,4-glucanase A (326 aa).

The signal sequence occupies residues 1 to 19 (MRSLVLLSSVLALVAPSKG). The active-site Proton donor is the Glu-150. The Nucleophile role is filled by Glu-257.

This sequence belongs to the glycosyl hydrolase 5 (cellulase A) family.

The protein localises to the secreted. The catalysed reaction is Endohydrolysis of (1-&gt;4)-beta-D-glucosidic linkages in cellulose, lichenin and cereal beta-D-glucans.. Its function is as follows. Has endoglucanase activity on substrates containing beta-1,4 glycosidic bonds, like in carboxymethylcellulose (CMC), hydroxyethylcellulose (HEC) and beta-glucan. Involved in the degradation of complex natural cellulosic substrates. The chain is Endo-beta-1,4-glucanase A (eglA) from Emericella nidulans (strain FGSC A4 / ATCC 38163 / CBS 112.46 / NRRL 194 / M139) (Aspergillus nidulans).